Here is a 644-residue protein sequence, read N- to C-terminus: MFQDNPLLAQLKQQLHSQTPRAEGVVKATEKGFGFLEVDAQKSYFIPPPQMKKVMHGDRIVAVIHTEKERESAEPEELIEPFLTRFVGKVQGKNDRLSIVPDHPLLKDAIPCRAARGVQHEFKEGDWAVAEMRRHPLKGDRSFYADLTQYITFADDHFVPWWVTLARHNLEKEAPNGVATEMLDEGLERQDLTALNFVTIDSASTEDMDDALYAEELADGRLQLTVAIADPTAWIAEGSKLDNAAKIRAFTNYLPGFNIPMLPRELSDDLCSLRANEVRPALACRMIIAADGTIDDDIAFFAATIESKAKLAYDNVSDWLENNGTWQPDNEGIAQQIRLLHRICLSRSEWRHHHALVFKDRPDYRFVLGEKGEVLDIVAEPRRIANRIVEESMIAANLCAARVLRDKLGFGIYNVHTGFDPANADALAALLKTHGLHVDAEEVLTLEGFCKLRRELDAQPSGFLDSRIRRFQSFAEISTEPGPHFGLGLEAYATWTSPIRKYGDMINHRLLKAVIKGEAIARPQEDITQQMAERRRLNRMAERDVGDWLYARFLNDKAGTNTRFAAEIIDVSRGGMRVRLVDNGAIAFIPAPFLHAVRDELVCSQENGTVQIKGETVYKVTDVIDVTIAEVRMETRSIIARPAA.

One can recognise an RNB domain in the interval 189–516 (RQDLTALNFV…NHRLLKAVIK (328 aa)). Residues 561–643 (NTRFAAEIID…ETRSIIARPA (83 aa)) enclose the S1 motif domain.

It belongs to the RNR ribonuclease family. RNase II subfamily.

It localises to the cytoplasm. It carries out the reaction Exonucleolytic cleavage in the 3'- to 5'-direction to yield nucleoside 5'-phosphates.. Functionally, involved in mRNA degradation. Hydrolyzes single-stranded polyribonucleotides processively in the 3' to 5' direction. The protein is Exoribonuclease 2 of Salmonella agona (strain SL483).